A 542-amino-acid chain; its full sequence is MTYSIGIDFGTGSGRVFLVNTENGEIIGQYVQTYAHGTIEGELNGHKLPQSYALQNANDYMEVIETGIPEILAKTNIDAKDIVGIGIDFTSSTVIFVDDQMEPMHNNPKFYNNPHAYVKLWKHHGAQAEADLLFNTAIEEKNRWLGYYGFNVSSEWMIPKIMEVNDKAPEVMTETADIMEAGDWIVNRLTGENVRSNCGLGFKSFWESSTGFHYDLFDKVDDNLSDIVRTKVEAPIVSIGESVGTVSAEMAHKLGLSPETVVSPFIIDAHSSLLGIGAEKDKEMTMVMGTSTCHLMLNKEQHKVPGISGSVKGAIIPDLYAYEAGQTAVGDLFEYVANQSPYEYVKTAEDRGISIFELLNEKASQRYPGESGLIALDWHNGNRSVLSDSNLKGSLFGLSLQTKHEDIYRAYMEATAFGTKMIMQQYQGWQMEVERVFACGGIPKKNHLLMEIYANVLNKKITVIDSEYAPAIGAAILGAICGGAHPNFSSAIQAMKEPVLYQVEPDHAQVLIYKKLFNAYKELHDLLGYKKARIMRNVSALM.

This sequence belongs to the ribulokinase family.

The catalysed reaction is D-ribulose + ATP = D-ribulose 5-phosphate + ADP + H(+). The enzyme catalyses L-ribulose + ATP = L-ribulose 5-phosphate + ADP + H(+). Its pathway is carbohydrate degradation; L-arabinose degradation via L-ribulose; D-xylulose 5-phosphate from L-arabinose (bacterial route): step 2/3. The chain is Ribulokinase 2 from Staphylococcus saprophyticus subsp. saprophyticus (strain ATCC 15305 / DSM 20229 / NCIMB 8711 / NCTC 7292 / S-41).